The primary structure comprises 75 residues: Small, acid-soluble spore protein Tlp (75 aa).

Belongs to the Tlp family.

It is found in the spore core. The chain is Small, acid-soluble spore protein Tlp from Geobacillus thermodenitrificans (strain NG80-2).